The sequence spans 208 residues: RLAPEYEAAATRYGVSGYPTLKDGEEAGAYDGPRTADGIVSHLKFISDKDASVVGFFRDLFSDGHSEFLKFAHTNVESLVKEYDDNGEGITLFRPSHLANKFEDKDLLTAYYDVDYEKKTFSHELSDFGLESTTGEVPVVAIRFVMQEEFSRFLQDYFDGNLKRYLKSEPIPETNDGPVKMDATANDVPSPYEVKGFPTIYFSPANKK.

Residues Arg1–Lys44 enclose the Thioredoxin 1 domain. Residue Lys44 is modified to N6-succinyllysine. The residue at position 49 (Lys49) is an N6-acetyllysine. The residue at position 133 (Thr133) is a Phosphothreonine. The Thioredoxin 2 domain occupies Ser151–Lys208. Lys163 bears the N6-acetyllysine mark.

It belongs to the protein disulfide isomerase family. In terms of assembly, part of the major histocompatibility complex class I (MHC I) peptide loading complex composed of TAP1, TAP2, B2M, MHC heavy chain, TAPBP, PDIA3, and CALR. Interacts with ERP27 and CANX. Interacts with SERPINA2 and SERPINA1. Interacts with ATP2A2. In terms of processing, within the major histocompatibility complex class I (MHC I) peptide loading complex forms reversible disulfide-linked heterodimers with TAPBP as part of its protein folding chaperone activity. This is essential to assist the dynamic assembly of the MHC I complex with high affinity antigens in the endoplasmic reticulum. Post-translationally, phosphorylated. In the caput epididymal spermatozoa, detected in the mid-peice and at low levels in the principal piece. In the cauda epididymal spermatozoa, detected at very low levels in the principal piece and not in the mid-piece (at protein level).

The protein resides in the endoplasmic reticulum. It localises to the endoplasmic reticulum lumen. It is found in the melanosome. It catalyses the reaction Catalyzes the rearrangement of -S-S- bonds in proteins.. Protein disulfide isomerase that catalyzes the formation, isomerization, and reduction or oxidation of disulfide bonds in client proteins and functions as a protein folding chaperone. Core component of the major histocompatibility complex class I (MHC I) peptide loading complex where it functions as an essential folding chaperone for TAPBP. Through TAPBP, assists the dynamic assembly of the MHC I complex with high affinity antigens in the endoplasmic reticulum. Therefore, plays a crucial role in the presentation of antigens to cytotoxic T cells in adaptive immunity. The polypeptide is Protein disulfide-isomerase A3 (Mesocricetus auratus (Golden hamster)).